A 469-amino-acid polypeptide reads, in one-letter code: 6-phosphofructo-2-kinase/fructose-2,6-bisphosphatase 4 (469 aa).

The segment at 1–249 (MASPRELTQN…YYLMNIHVTP (249 aa)) is 6-phosphofructo-2-kinase. An ATP-binding site is contributed by 46 to 54 (GLPARGKTY). Residues arginine 79 and arginine 103 each coordinate beta-D-fructose 6-phosphate. The active site involves aspartate 129. Threonine 131 and arginine 137 together coordinate beta-D-fructose 6-phosphate. The active site involves cysteine 159. 168 to 173 (NIVQVK) is an ATP binding site. The beta-D-fructose 6-phosphate site is built by lysine 173, arginine 194, and tyrosine 198. Positions 250-469 (RSIYLCRHGE…EALVTVPAHQ (220 aa)) are fructose-2,6-bisphosphatase. Position 256 (arginine 256) interacts with beta-D-fructose 2,6-bisphosphate. The active-site Tele-phosphohistidine intermediate is histidine 257. Residues asparagine 263, glycine 269, and arginine 306 each coordinate beta-D-fructose 2,6-bisphosphate. The active-site Proton donor/acceptor is the glutamate 326. 6 residues coordinate beta-D-fructose 2,6-bisphosphate: tyrosine 337, arginine 351, lysine 355, tyrosine 366, glutamine 392, and arginine 396. 348-351 (FALR) provides a ligand contact to ATP. ATP is bound by residues 392 to 396 (QAVMR) and tyrosine 428. The residue at position 444 (threonine 444) is a Phosphothreonine; by PKC.

This sequence in the C-terminal section; belongs to the phosphoglycerate mutase family. In terms of assembly, homodimer.

It catalyses the reaction beta-D-fructose 2,6-bisphosphate + H2O = beta-D-fructose 6-phosphate + phosphate. The catalysed reaction is beta-D-fructose 6-phosphate + ATP = beta-D-fructose 2,6-bisphosphate + ADP + H(+). With respect to regulation, the most important regulatory mechanism of these opposing activities is by phosphorylation and dephosphorylation of the enzyme. In terms of biological role, synthesis and degradation of fructose 2,6-bisphosphate. The chain is 6-phosphofructo-2-kinase/fructose-2,6-bisphosphatase 4 (PFKFB4) from Homo sapiens (Human).